Reading from the N-terminus, the 459-residue chain is Argininosuccinate lyase (459 aa).

This sequence belongs to the lyase 1 family. Argininosuccinate lyase subfamily.

The protein localises to the cytoplasm. It catalyses the reaction 2-(N(omega)-L-arginino)succinate = fumarate + L-arginine. The protein operates within amino-acid biosynthesis; L-arginine biosynthesis; L-arginine from L-ornithine and carbamoyl phosphate: step 3/3. The protein is Argininosuccinate lyase of Prochlorococcus marinus (strain AS9601).